A 208-amino-acid polypeptide reads, in one-letter code: Small ribosomal subunit protein uS4 (208 aa).

The S4 RNA-binding domain maps to 98-161 (RRLDNVIYRM…KELEIIKESL (64 aa)).

The protein belongs to the universal ribosomal protein uS4 family. Part of the 30S ribosomal subunit. Contacts protein S5. The interaction surface between S4 and S5 is involved in control of translational fidelity.

Functionally, one of the primary rRNA binding proteins, it binds directly to 16S rRNA where it nucleates assembly of the body of the 30S subunit. With S5 and S12 plays an important role in translational accuracy. The polypeptide is Small ribosomal subunit protein uS4 (Thermodesulfovibrio yellowstonii (strain ATCC 51303 / DSM 11347 / YP87)).